The primary structure comprises 307 residues: Transcription factor DIVARICATA (307 aa).

Residues 21–74 (RSTTRWTAAENKAFENALAVFDENTPNRWERVAERVPGKTVGDVMRQYKELEDD) form the SANT domain. The segment at 109–133 (QSYGTGGRKSSSGRPSEQERKKGVP) is disordered. Residues 124–133 (SEQERKKGVP) are compositionally biased toward basic and acidic residues. The HTH myb-type domain occupies 126 to 182 (QERKKGVPWTEEEHKLFLMGLKKYGKGDWRNISRNFVITRTPTQVASHAQKYFIRQL). Residues 154–178 (WRNISRNFVITRTPTQVASHAQKYF) constitute a DNA-binding region (H-T-H motif). Polar residues-rich tracts occupy residues 196–206 (ITTVNLSDNQT) and 222–231 (MAQQQTSSTS). The segment at 196-231 (ITTVNLSDNQTPSPDNKKPPSSPDHSMAQQQTSSTS) is disordered.

The protein localises to the nucleus. Involved in the dorsovental asymmetry of flowers. Promotes ventral identity. In Antirrhinum majus (Garden snapdragon), this protein is Transcription factor DIVARICATA (DIVARICATA).